The primary structure comprises 176 residues: Ribosome maturation factor RimM (176 aa).

One can recognise a PRC barrel domain in the interval 92–165 (EDEFLYSDLI…RLVVVPPVYA (74 aa)).

The protein belongs to the RimM family. As to quaternary structure, binds ribosomal protein uS19.

The protein localises to the cytoplasm. Its function is as follows. An accessory protein needed during the final step in the assembly of 30S ribosomal subunit, possibly for assembly of the head region. Essential for efficient processing of 16S rRNA. May be needed both before and after RbfA during the maturation of 16S rRNA. It has affinity for free ribosomal 30S subunits but not for 70S ribosomes. The chain is Ribosome maturation factor RimM from Paramagnetospirillum magneticum (strain ATCC 700264 / AMB-1) (Magnetospirillum magneticum).